The sequence spans 162 residues: Ecotin (162 aa).

An N-terminal signal peptide occupies residues Met1–Ala18. Cys70 and Cys107 form a disulfide bridge.

Belongs to the protease inhibitor I11 (ecotin) family. Homodimer.

It is found in the periplasm. Its function is as follows. General inhibitor of pancreatic serine proteases: inhibits chymotrypsin, trypsin, elastases, factor X, kallikrein as well as a variety of other proteases. The polypeptide is Ecotin (Salmonella choleraesuis (strain SC-B67)).